An 860-amino-acid polypeptide reads, in one-letter code: Alpha,alpha-trehalose-phosphate synthase [UDP-forming] 6 (860 aa).

The residue at position 5 (Ser5) is a Phosphoserine. The segment at 53–557 is glycosyltransferase; that stretch reads DRIIIVANEL…ARSFLQDLER (505 aa).

This sequence in the N-terminal section; belongs to the glycosyltransferase 20 family. It in the C-terminal section; belongs to the trehalose phosphatase family. As to quaternary structure, binds to the phosphopeptide-binding site of GRF/14-3-3. Post-translationally, phosphorylated. Expressed in seedlings, leaves, stems, flowers, siliques and roots.

The catalysed reaction is D-glucose 6-phosphate + UDP-alpha-D-glucose = alpha,alpha-trehalose 6-phosphate + UDP + H(+). Functionally, regulates plant architecture, shape of epidermal pavement cells and branching of trichomes. In Arabidopsis thaliana (Mouse-ear cress), this protein is Alpha,alpha-trehalose-phosphate synthase [UDP-forming] 6.